The primary structure comprises 3184 residues: Cilia and flagella-associated protein 47 (3184 aa).

The 123-residue stretch at 1729–1851 (SDSERILLSW…LCVYLYERLP (123 aa)) folds into the Calponin-homology (CH) domain. Residues 2491–2514 (RDEEESQEETDTEKDFSSQETPSD) form a disordered region. Acidic residues predominate over residues 2493–2502 (EEESQEETDT).

In terms of assembly, interacts with CFAP65. Highly expressed in spermatzoa (at protein level).

The protein localises to the cytoplasm. It localises to the cytoskeleton. The protein resides in the flagellum basal body. Plays a role in flagellar formation and sperm motility. In Mus musculus (Mouse), this protein is Cilia and flagella-associated protein 47.